A 231-amino-acid chain; its full sequence is GrpE protein homolog, mitochondrial (231 aa).

The disordered stretch occupies residues 49-71 (SEKAGEKAEEKAEEQNLSAEEQK).

The protein belongs to the GrpE family. Component of the PAM complex, at least composed of mtHsp70, MGE1, TIM44, PAM16, PAM17 and PAM18.

It is found in the mitochondrion matrix. Its function is as follows. Essential component of the PAM complex, a complex required for the translocation of transit peptide-containing proteins from the inner membrane into the mitochondrial matrix in an ATP-dependent manner. Seems to control the nucleotide-dependent binding of SSC1 to substrate proteins. The polypeptide is GrpE protein homolog, mitochondrial (mge1) (Candida glabrata (strain ATCC 2001 / BCRC 20586 / JCM 3761 / NBRC 0622 / NRRL Y-65 / CBS 138) (Yeast)).